The following is a 256-amino-acid chain: (R)-S-adenosyl-L-methionine hydrolase (256 aa).

Asp7, His41, Asp68, and Asn183 together coordinate adenosine. Asn183, Tyr212, Ser226, Glu231, Val234, and Met236 together coordinate (R)-S-adenosyl-L-methionine. Position 234 (Val234) interacts with adenosine.

Belongs to the SAM hydrolase / SAM-dependent halogenase family. Homotrimer.

It catalyses the reaction (R)-S-adenosyl-L-methionine + H2O = adenosine + L-methionine + H(+). Functionally, catalyzes the hydrolysis of S-adenosyl-L-methionine (SAM) into adenosine and L-methionine. Is likely stereoselective, specifically hydrolyzing (R)-S-adenosyl-L-methionine ((R)-SAM), the inactive form of the ubiquitous cofactor SAM, and not the active form of SAM, (S)-S-adenosyl-L-methionine. Probaly plays a role in preventing accumulation of (R)-S-adenosyl-L-methionine in cells; maintenance of (S)-S-denosyl-L-methionine homochirality is important for cellular health given that the (R)-form is largely inactive as a methyl donor and can function as an inhibitor of methyltransferases. Is unable to mediate a fluorination or chlorination reaction with SAM. This is (R)-S-adenosyl-L-methionine hydrolase from Pyrococcus horikoshii (strain ATCC 700860 / DSM 12428 / JCM 9974 / NBRC 100139 / OT-3).